The following is a 255-amino-acid chain: Pyrroloquinoline-quinone synthase (255 aa).

Belongs to the PqqC family.

The enzyme catalyses 6-(2-amino-2-carboxyethyl)-7,8-dioxo-1,2,3,4,7,8-hexahydroquinoline-2,4-dicarboxylate + 3 O2 = pyrroloquinoline quinone + 2 H2O2 + 2 H2O + H(+). It functions in the pathway cofactor biosynthesis; pyrroloquinoline quinone biosynthesis. In terms of biological role, ring cyclization and eight-electron oxidation of 3a-(2-amino-2-carboxyethyl)-4,5-dioxo-4,5,6,7,8,9-hexahydroquinoline-7,9-dicarboxylic-acid to PQQ. This Acinetobacter baylyi (strain ATCC 33305 / BD413 / ADP1) protein is Pyrroloquinoline-quinone synthase.